Consider the following 270-residue polypeptide: Formamidopyrimidine-DNA glycosylase (270 aa).

Pro2 (schiff-base intermediate with DNA) is an active-site residue. Catalysis depends on Glu3, which acts as the Proton donor. Lys58 acts as the Proton donor; for beta-elimination activity in catalysis. Residues His90, Arg109, and Arg152 each contribute to the DNA site. An FPG-type zinc finger spans residues 237 to 270 (RVYGREGEACECGGAIVRVVQSGRSTFYCRKCQR). The Proton donor; for delta-elimination activity role is filled by Arg260.

The protein belongs to the FPG family. Monomer. Zn(2+) is required as a cofactor.

The catalysed reaction is Hydrolysis of DNA containing ring-opened 7-methylguanine residues, releasing 2,6-diamino-4-hydroxy-5-(N-methyl)formamidopyrimidine.. It carries out the reaction 2'-deoxyribonucleotide-(2'-deoxyribose 5'-phosphate)-2'-deoxyribonucleotide-DNA = a 3'-end 2'-deoxyribonucleotide-(2,3-dehydro-2,3-deoxyribose 5'-phosphate)-DNA + a 5'-end 5'-phospho-2'-deoxyribonucleoside-DNA + H(+). Functionally, involved in base excision repair of DNA damaged by oxidation or by mutagenic agents. Acts as a DNA glycosylase that recognizes and removes damaged bases. Has a preference for oxidized purines, such as 7,8-dihydro-8-oxoguanine (8-oxoG). Has AP (apurinic/apyrimidinic) lyase activity and introduces nicks in the DNA strand. Cleaves the DNA backbone by beta-delta elimination to generate a single-strand break at the site of the removed base with both 3'- and 5'-phosphates. The chain is Formamidopyrimidine-DNA glycosylase from Sphingopyxis alaskensis (strain DSM 13593 / LMG 18877 / RB2256) (Sphingomonas alaskensis).